A 258-amino-acid chain; its full sequence is Methylthioribulose-1-phosphate dehydratase (258 aa).

Residues 1-20 (MTPPSNGQAAETNDHLVQSD) show a composition bias toward polar residues. The segment at 1 to 21 (MTPPSNGQAAETNDHLVQSDN) is disordered. Substrate is bound at residue cysteine 105. Zn(2+) is bound by residues histidine 123 and histidine 125. Residue glutamate 153 is the Proton donor/acceptor of the active site. Residue histidine 210 participates in Zn(2+) binding.

It belongs to the aldolase class II family. MtnB subfamily. Zn(2+) is required as a cofactor.

It is found in the cytoplasm. It carries out the reaction 5-(methylsulfanyl)-D-ribulose 1-phosphate = 5-methylsulfanyl-2,3-dioxopentyl phosphate + H2O. The protein operates within amino-acid biosynthesis; L-methionine biosynthesis via salvage pathway; L-methionine from S-methyl-5-thio-alpha-D-ribose 1-phosphate: step 2/6. Catalyzes the dehydration of methylthioribulose-1-phosphate (MTRu-1-P) into 2,3-diketo-5-methylthiopentyl-1-phosphate (DK-MTP-1-P). This is Methylthioribulose-1-phosphate dehydratase from Chaetomium globosum (strain ATCC 6205 / CBS 148.51 / DSM 1962 / NBRC 6347 / NRRL 1970) (Soil fungus).